The chain runs to 252 residues: CLAVATA3/ESR (CLE)-related protein 4A-2 (252 aa).

The first 21 residues, 1–21 (MAKNAMLCLLILRVVLALAFA), serve as a signal peptide directing secretion. The tract at residues 21-83 (ATNKKGDEEP…SNQLPNNNWM (63 aa)) is required for secretion from the host cytoplasm to the host apoplasm. Asn32 is a glycosylation site (N-linked (GlcNAc...) asparagine). The tract at residues 116–252 (RKTGMHSQRH…APAGPDPIHH (137 aa)) is disordered. 4 stretches are compositionally biased toward basic and acidic residues: residues 125–137 (HHEE…EKRV), 144–179 (PIHH…EKRV), 186–200 (PIHH…EKRA), and 207–242 (PTHH…EKRG). An A-1 repeat occupies 127-135 (EETTLEQEK). The tract at residues 127-219 (EETTLEQEKR…HEETTLEQEK (93 aa)) is 6 X approximate repeat A. The CLE-1 repeat unit spans residues 136-147 (RVAGAGPDPIHH). The 6 X approximate repeat CLE stretch occupies residues 136-252 (RVAGAGPDPI…APAGPDPIHH (117 aa)). One copy of the A-2 repeat lies at 148–156 (QDTTLEQEK). One copy of the CLE-2 repeat lies at 157–168 (RAVPAGPDPKHH). The A-3 repeat unit spans residues 169–177 (EETTLEQEK). One copy of the CLE-3 repeat lies at 178–189 (RVAGAGPDPIHH). The A-4 repeat unit spans residues 190-198 (QDTTLEQEK). The stretch at 199–210 (RAVPAGPDPTHH) is one CLE-4 repeat. One copy of the A-5 repeat lies at 211-219 (EETTLEQEK). A CLE-5 repeat occupies 220–231 (RAVPAGPDPKHH). One copy of the A-6 repeat lies at 232–240 (EETTFEQEK). Residues 241–252 (RGAPAGPDPIHH) form a CLE-6 repeat.

It belongs to the CLV3/ESR signal peptide family. In terms of tissue distribution, highly expressed exclusively within the dorsal esophageal gland cell during syncytium formation in host plants.

The protein resides in the secreted. Its subcellular location is the host cytoplasm. The protein localises to the host extracellular space. It localises to the extracellular space. It is found in the apoplast. Mimics host plant CLE extracellular signal peptides that regulate cell fate. May play a role in the differentiation or division of feeding cells (syncytia) induced in plant roots during infection. The sequence is that of CLAVATA3/ESR (CLE)-related protein 4A-2 (CLE-4A-2) from Globodera rostochiensis (Golden nematode worm).